The sequence spans 176 residues: Calcium and integrin-binding family member 2 (176 aa).

3 consecutive EF-hand domains span residues 55 to 90 (RENPFKERIVEAFSEDGEGNLTFNDFVDMFSVLCES), 92 to 127 (PRDLKASYAFKIYDFNTDNFICKEDLQLTLARLTKS), and 133 to 168 (EVVLVCDKVIEEADLDGDGKLGFADFEDMIAKAPDF). Ca(2+) contacts are provided by D105, N107, D109, D116, D146, D148, D150, K152, and D157.

In terms of assembly, monomer. Homodimer. Interacts with WHRN and MYO7A. Interacts with ITGA2B (via C-terminus cytoplasmic tail region); the interactions are stabilized/increased in a calcium and magnesium-dependent manner. Interacts with ITGA7 (via C-terminus cytoplasmic tail region); the interactions are stabilized/increased in a calcium and magnesium-dependent manner. Interacts with TMC1. Interacts with TMC2. In terms of tissue distribution, expressed in liver, heart, kidney, brain, spleen, stomach, ovary, testis and muscle.

Its subcellular location is the cytoplasm. It localises to the cell projection. It is found in the stereocilium. The protein localises to the photoreceptor inner segment. The protein resides in the cilium. Its subcellular location is the photoreceptor outer segment. It localises to the cell membrane. It is found in the sarcolemma. Its function is as follows. Calcium- and integrin-binding protein that plays a role in intracellular calcium homeostasis. Acts as an auxiliary subunit of the sensory mechanoelectrical transduction (MET) channel in hair cells. Essential for mechanoelectrical transduction (MET) currents in auditory hair cells and thereby required for hearing. Regulates the function of hair cell mechanotransduction by controlling the distribution of transmembrane channel-like proteins TMC1 and TMC2, and by regulating the function of the MET channels in hair cells. Required for the maintenance of auditory hair cell stereocilia bundle morphology and function and for hair-cell survival in the cochlea. Critical for proper photoreceptor cell maintenance and function. Plays a role in intracellular calcium homeostasis by decreasing ATP-induced calcium release. In Ovis aries (Sheep), this protein is Calcium and integrin-binding family member 2 (CIB2).